The sequence spans 188 residues: Peptide deformylase (188 aa).

The interval 70–90 is disordered; the sequence is AEPVACDHDGHHHHHQPTKKE. Fe cation contacts are provided by cysteine 113 and histidine 155. The active site involves glutamate 156. Histidine 159 contacts Fe cation.

The protein belongs to the polypeptide deformylase family. The cofactor is Fe(2+).

It carries out the reaction N-terminal N-formyl-L-methionyl-[peptide] + H2O = N-terminal L-methionyl-[peptide] + formate. Removes the formyl group from the N-terminal Met of newly synthesized proteins. Requires at least a dipeptide for an efficient rate of reaction. N-terminal L-methionine is a prerequisite for activity but the enzyme has broad specificity at other positions. The protein is Peptide deformylase of Novosphingobium aromaticivorans (strain ATCC 700278 / DSM 12444 / CCUG 56034 / CIP 105152 / NBRC 16084 / F199).